Reading from the N-terminus, the 468-residue chain is Citrate synthase, mitochondrial (468 aa).

The transit peptide at 1–30 (MSLISAGRVCARILGAKNSPCALIAARQAS) directs the protein to the mitochondrion. Active-site residues include histidine 303 and histidine 349. Arginine 358 lines the oxaloacetate pocket. Aspartate 404 is an active-site residue. Oxaloacetate contacts are provided by arginine 430 and arginine 450.

This sequence belongs to the citrate synthase family. As to quaternary structure, homodimer.

The protein localises to the mitochondrion matrix. It carries out the reaction oxaloacetate + acetyl-CoA + H2O = citrate + CoA + H(+). The protein operates within carbohydrate metabolism; tricarboxylic acid cycle; isocitrate from oxaloacetate: step 1/2. In terms of biological role, key enzyme of the Krebs tricarboxylic acid cycle which catalyzes the synthesis of citrate from acetyl coenzyme A and oxaloacetate. The sequence is that of Citrate synthase, mitochondrial (cs) from Xenopus laevis (African clawed frog).